Here is a 264-residue protein sequence, read N- to C-terminus: Putative [LysW]-aminoadipate/[LysW]-glutamate kinase (264 aa).

Residues 34 to 35, Arg61, and Asn169 each bind substrate; that span reads GG.

Belongs to the acetylglutamate kinase family. LysZ subfamily.

It is found in the cytoplasm. It carries out the reaction [amino-group carrier protein]-C-terminal-N-(1,4-dicarboxybutan-1-yl)-L-glutamine + ATP = [amino-group carrier protein]-C-terminal-N-(1-carboxy-5-phosphooxy-5-oxopentan-1-yl)-L-glutamine + ADP. It catalyses the reaction [amino-group carrier protein]-C-terminal-gamma-(L-glutamyl)-L-glutamate + ATP = [amino-group carrier protein]-C-terminal-gamma-(5-phospho-L-glutamyl)-L-glutamate + ADP. Its pathway is amino-acid biosynthesis; L-lysine biosynthesis via AAA pathway; L-lysine from L-alpha-aminoadipate (Thermus route): step 2/5. The protein operates within amino-acid biosynthesis; L-arginine biosynthesis. Functionally, involved in both the arginine and lysine biosynthetic pathways. Phosphorylates the LysW-bound precursors glutamate (for arginine biosynthesis), respectively alpha-aminoadipate (for lysine biosynthesis). In Ignicoccus hospitalis (strain KIN4/I / DSM 18386 / JCM 14125), this protein is Putative [LysW]-aminoadipate/[LysW]-glutamate kinase.